The chain runs to 353 residues: DNA-directed RNA polymerase subunit alpha (353 aa).

The segment at 1–226 is alpha N-terminal domain (alpha-NTD); it reads MLISQRPTLT…ELFGLARELN (226 aa). Positions 241-353 are alpha C-terminal domain (alpha-CTD); the sequence is ADHIASFGLP…TEDYAETEQL (113 aa). The disordered stretch occupies residues 326 to 353; the sequence is ATGTWSDTDAGSFGDAEGTEDYAETEQL. Over residues 342–353 the composition is skewed to acidic residues; the sequence is EGTEDYAETEQL.

The protein belongs to the RNA polymerase alpha chain family. In terms of assembly, homodimer. The RNAP catalytic core consists of 2 alpha, 1 beta, 1 beta' and 1 omega subunit. When a sigma factor is associated with the core the holoenzyme is formed, which can initiate transcription.

It carries out the reaction RNA(n) + a ribonucleoside 5'-triphosphate = RNA(n+1) + diphosphate. Its function is as follows. DNA-dependent RNA polymerase catalyzes the transcription of DNA into RNA using the four ribonucleoside triphosphates as substrates. This chain is DNA-directed RNA polymerase subunit alpha, found in Rhodococcus jostii (strain RHA1).